Here is a 431-residue protein sequence, read N- to C-terminus: Trigger factor (431 aa).

The 86-residue stretch at 163–248 folds into the PPIase FKBP-type domain; sequence GDTVVIDYAG…IHEVKGKELP (86 aa).

The protein belongs to the FKBP-type PPIase family. Tig subfamily.

Its subcellular location is the cytoplasm. It catalyses the reaction [protein]-peptidylproline (omega=180) = [protein]-peptidylproline (omega=0). Involved in protein export. Acts as a chaperone by maintaining the newly synthesized protein in an open conformation. Functions as a peptidyl-prolyl cis-trans isomerase. The protein is Trigger factor of Latilactobacillus sakei subsp. sakei (strain 23K) (Lactobacillus sakei subsp. sakei).